Here is a 1408-residue protein sequence, read N- to C-terminus: ARF guanine-nucleotide exchange factor 1 (1408 aa).

At S49 the chain carries Phosphoserine. The disordered stretch occupies residues 262 to 287 (TTTSDNDLSSTDDDSAVADDNKNEKP). Residues 552 to 706 (FNEKAKKGIQ…IIMLNTDSHN (155 aa)) form the SEC7 domain.

Interacts (via N-terminal region) with SEC21 (via C-terminus). Interacts with GMH1. Interacts with DRS2.

The protein localises to the cytoplasm. It is found in the cytosol. Its subcellular location is the membrane. It localises to the endoplasmic reticulum. The protein resides in the mitochondrion. Functionally, activates the ARF proteins by exchanging bound GDP for free GTP. Plays a role in maintaining mitochondrial morphology, and in the turnover of mitochondria through mitophagy. In Saccharomyces cerevisiae (strain ATCC 204508 / S288c) (Baker's yeast), this protein is ARF guanine-nucleotide exchange factor 1 (GEA1).